Consider the following 325-residue polypeptide: NADH-quinone oxidoreductase subunit H (325 aa).

The next 8 membrane-spanning stretches (helical) occupy residues 11–31 (ILLT…CGAF), 81–101 (VIFT…FAIV), 114–134 (IGIL…LFAG), 154–174 (LSYE…AGSF), 186–206 (VWNV…GVAV), 237–257 (FFVG…TLFF), 265–285 (LPPF…FILI), and 304–324 (ICLP…LWQA).

This sequence belongs to the complex I subunit 1 family. As to quaternary structure, NDH-1 is composed of 13 different subunits. Subunits NuoA, H, J, K, L, M, N constitute the membrane sector of the complex.

The protein localises to the cell inner membrane. The enzyme catalyses a quinone + NADH + 5 H(+)(in) = a quinol + NAD(+) + 4 H(+)(out). Functionally, NDH-1 shuttles electrons from NADH, via FMN and iron-sulfur (Fe-S) centers, to quinones in the respiratory chain. The immediate electron acceptor for the enzyme in this species is believed to be ubiquinone. Couples the redox reaction to proton translocation (for every two electrons transferred, four hydrogen ions are translocated across the cytoplasmic membrane), and thus conserves the redox energy in a proton gradient. This subunit may bind ubiquinone. This chain is NADH-quinone oxidoreductase subunit H, found in Escherichia fergusonii (strain ATCC 35469 / DSM 13698 / CCUG 18766 / IAM 14443 / JCM 21226 / LMG 7866 / NBRC 102419 / NCTC 12128 / CDC 0568-73).